Here is a 158-residue protein sequence, read N- to C-terminus: Ribonuclease H (158 aa).

Residues 3–144 (ELKLIHIFTD…CDQLARAAAE (142 aa)) form the RNase H type-1 domain. Positions 12, 50, 72, and 136 each coordinate Mg(2+).

It belongs to the RNase H family. In terms of assembly, monomer. Mg(2+) serves as cofactor.

It localises to the cytoplasm. It catalyses the reaction Endonucleolytic cleavage to 5'-phosphomonoester.. Functionally, endonuclease that specifically degrades the RNA of RNA-DNA hybrids. In Shewanella sp. (strain MR-4), this protein is Ribonuclease H.